The chain runs to 201 residues: Lipopolysaccharide core heptose(II)-phosphate phosphatase (201 aa).

A signal peptide spans 1 to 33 (MLAFTLRFIKNKRYFAILAGALVIIAGLASQHA).

It belongs to the phosphoglycerate mutase family. Ais subfamily.

The protein resides in the periplasm. The protein operates within bacterial outer membrane biogenesis; lipopolysaccharide metabolism. Functionally, catalyzes the dephosphorylation of heptose(II) of the outer membrane lipopolysaccharide core. This is Lipopolysaccharide core heptose(II)-phosphate phosphatase from Salmonella typhi.